The sequence spans 157 residues: Serine-protein kinase RsbW (157 aa).

Belongs to the anti-sigma-factor family.

The enzyme catalyses L-seryl-[protein] + ATP = O-phospho-L-seryl-[protein] + ADP + H(+). It catalyses the reaction L-threonyl-[protein] + ATP = O-phospho-L-threonyl-[protein] + ADP + H(+). Functionally, negative regulator of sigma-B activity. Phosphorylates and inactivates its specific antagonist protein, RsbV. Upon phosphorylation of RsbV, RsbW is released and binds to sigma-B, thereby blocking its ability to form an RNA polymerase holoenzyme (E-sigma-B). The sequence is that of Serine-protein kinase RsbW from Listeria monocytogenes serotype 4b (strain CLIP80459).